The following is an 83-amino-acid chain: uncharacterized protein (83 aa).

2 helical membrane-spanning segments follow: residues 23-43 (GGCYFAFMGVAWVLLAISAIA) and 49-69 (SLWWDIWSLGLLVLIPAVVYG).

Its subcellular location is the cell membrane. This is an uncharacterized protein from Mycobacterium tuberculosis (strain CDC 1551 / Oshkosh).